Consider the following 216-residue polypeptide: CDP-diacylglycerol--glycerol-3-phosphate 3-phosphatidyltransferase (216 aa).

A run of 4 helical transmembrane segments spans residues 40 to 60 (VVSI…FLDG), 88 to 108 (VMLC…CILY), 141 to 161 (MGAV…LAGA), and 176 to 196 (VVPV…FFPI).

The protein belongs to the CDP-alcohol phosphatidyltransferase class-I family.

Its subcellular location is the cell membrane. The enzyme catalyses a CDP-1,2-diacyl-sn-glycerol + sn-glycerol 3-phosphate = a 1,2-diacyl-sn-glycero-3-phospho-(1'-sn-glycero-3'-phosphate) + CMP + H(+). Its pathway is phospholipid metabolism; phosphatidylglycerol biosynthesis; phosphatidylglycerol from CDP-diacylglycerol: step 1/2. Its function is as follows. This protein catalyzes the committed step to the synthesis of the acidic phospholipids. This chain is CDP-diacylglycerol--glycerol-3-phosphate 3-phosphatidyltransferase (pgsA), found in Treponema pallidum (strain Nichols).